We begin with the raw amino-acid sequence, 202 residues long: ATP-dependent Clp protease proteolytic subunit (202 aa).

Serine 98 serves as the catalytic Nucleophile. Histidine 123 is a catalytic residue.

Belongs to the peptidase S14 family. Fourteen ClpP subunits assemble into 2 heptameric rings which stack back to back to give a disk-like structure with a central cavity, resembling the structure of eukaryotic proteasomes.

Its subcellular location is the cytoplasm. The enzyme catalyses Hydrolysis of proteins to small peptides in the presence of ATP and magnesium. alpha-casein is the usual test substrate. In the absence of ATP, only oligopeptides shorter than five residues are hydrolyzed (such as succinyl-Leu-Tyr-|-NHMec, and Leu-Tyr-Leu-|-Tyr-Trp, in which cleavage of the -Tyr-|-Leu- and -Tyr-|-Trp bonds also occurs).. Its function is as follows. Cleaves peptides in various proteins in a process that requires ATP hydrolysis. Has a chymotrypsin-like activity. Plays a major role in the degradation of misfolded proteins. The polypeptide is ATP-dependent Clp protease proteolytic subunit (Desulfovibrio desulfuricans (strain ATCC 27774 / DSM 6949 / MB)).